A 565-amino-acid chain; its full sequence is Anaphase-promoting complex subunit 7 (565 aa).

10 TPR repeats span residues 101–134 (EIEV…RQRT), 169–202 (LDAI…LDWL), 203–236 (SVWI…LRDN), 237–270 (VDLL…DPYL), 339–372 (VQAL…APCR), 373–406 (LDCY…LGAN), 407–441 (AQTL…RPDY), 442–474 (IKAV…NQSD), 475–508 (CVLH…DPND), and 509–531 (QKSL…TQEE). K229 is modified (N6-acetyllysine). Positions 513–523 (EGMQKMEKEES) are enriched in basic and acidic residues. A disordered region spans residues 513-565 (EGMQKMEKEESPTDATQEEDVDDMEGSGEEGDLEGSDSEAAQWADQEQWFGMQ). Acidic residues predominate over residues 528-549 (TQEEDVDDMEGSGEEGDLEGSD).

It belongs to the APC7 family. As to quaternary structure, V-shaped homodimer. The mammalian APC/C is composed at least of 14 distinct subunits ANAPC1, ANAPC2, CDC27/APC3, ANAPC4, ANAPC5, CDC16/APC6, ANAPC7, CDC23/APC8, ANAPC10, ANAPC11, CDC26/APC12, ANAPC13, ANAPC15 and ANAPC16 that assemble into a complex of at least 19 chains with a combined molecular mass of around 1.2 MDa; APC/C interacts with FZR1 and FBXO5.

It localises to the cytoplasm. The protein resides in the cytoskeleton. It is found in the nucleus. Its subcellular location is the spindle. Its pathway is protein modification; protein ubiquitination. Component of the anaphase promoting complex/cyclosome (APC/C), a cell cycle-regulated E3 ubiquitin ligase that controls progression through mitosis and the G1 phase of the cell cycle. The APC/C complex acts by mediating ubiquitination and subsequent degradation of target proteins: it mainly mediates the formation of 'Lys-11'-linked polyubiquitin chains and, to a lower extent, the formation of 'Lys-48'- and 'Lys-63'-linked polyubiquitin chains. The APC/C complex catalyzes assembly of branched 'Lys-11'-/'Lys-48'-linked branched ubiquitin chains on target proteins. APC7 is not required for the assembly of the APC/C complex, but has an enzyme-substrate adapter activity mediating the processive ubiquitination of specific substrates. Involved in brain development through the specific ubiquitination and clearance of MKI67 from constitutive heterochromatin after neuronal progenitors exit mitosis. This chain is Anaphase-promoting complex subunit 7, found in Homo sapiens (Human).